A 120-amino-acid chain; its full sequence is Large ribosomal subunit protein bL19c (120 aa).

Belongs to the bacterial ribosomal protein bL19 family.

It is found in the plastid. It localises to the chloroplast. This chain is Large ribosomal subunit protein bL19c, found in Phaeodactylum tricornutum (strain CCAP 1055/1).